Consider the following 189-residue polypeptide: Imidazoleglycerol-phosphate dehydratase (189 aa).

It belongs to the imidazoleglycerol-phosphate dehydratase family.

It is found in the cytoplasm. It catalyses the reaction D-erythro-1-(imidazol-4-yl)glycerol 3-phosphate = 3-(imidazol-4-yl)-2-oxopropyl phosphate + H2O. The protein operates within amino-acid biosynthesis; L-histidine biosynthesis; L-histidine from 5-phospho-alpha-D-ribose 1-diphosphate: step 6/9. The chain is Imidazoleglycerol-phosphate dehydratase from Nautilia profundicola (strain ATCC BAA-1463 / DSM 18972 / AmH).